A 104-amino-acid chain; its full sequence is MNNKYFLTKIDLQFFASKKGVGSTKNGRDSHAKRLGAKKADGQMIRTGQIIYRQRGTRVYPGVNVGLGSDDTLFALSDGLVKYQKFGPKQGKTRVSVVKHKLDA.

Positions 1–15 (MNNKYFLTKIDLQFF) are excised as a propeptide.

This sequence belongs to the bacterial ribosomal protein bL27 family. In terms of processing, the N-terminus is cleaved by ribosomal processing cysteine protease Prp.

The chain is Large ribosomal subunit protein bL27 from Mycoplasma pneumoniae (strain ATCC 29342 / M129 / Subtype 1) (Mycoplasmoides pneumoniae).